Reading from the N-terminus, the 417-residue chain is Serine hydroxymethyltransferase (417 aa).

Residues Leu-121 and Gly-125–Leu-127 contribute to the (6S)-5,6,7,8-tetrahydrofolate site. An N6-(pyridoxal phosphate)lysine modification is found at Lys-229. Residue Ser-355 to Phe-357 coordinates (6S)-5,6,7,8-tetrahydrofolate.

It belongs to the SHMT family. Homodimer. It depends on pyridoxal 5'-phosphate as a cofactor.

The protein localises to the cytoplasm. It catalyses the reaction (6R)-5,10-methylene-5,6,7,8-tetrahydrofolate + glycine + H2O = (6S)-5,6,7,8-tetrahydrofolate + L-serine. It functions in the pathway one-carbon metabolism; tetrahydrofolate interconversion. Its pathway is amino-acid biosynthesis; glycine biosynthesis; glycine from L-serine: step 1/1. Catalyzes the reversible interconversion of serine and glycine with tetrahydrofolate (THF) serving as the one-carbon carrier. This reaction serves as the major source of one-carbon groups required for the biosynthesis of purines, thymidylate, methionine, and other important biomolecules. Also exhibits THF-independent aldolase activity toward beta-hydroxyamino acids, producing glycine and aldehydes, via a retro-aldol mechanism. The chain is Serine hydroxymethyltransferase from Salmonella paratyphi C (strain RKS4594).